The following is a 372-amino-acid chain: Dual-specificity RNA methyltransferase RlmN (372 aa).

E97 functions as the Proton acceptor in the catalytic mechanism. The Radical SAM core domain maps to 103–340 (ETDRKTLCVS…AVVRKNRGTD (238 aa)). A disulfide bridge links C110 with C345. Residues C117, C121, and C124 each contribute to the [4Fe-4S] cluster site. Residues 172–173 (GE), S204, 226–228 (SLN), and N302 contribute to the S-adenosyl-L-methionine site. Residue C345 is the S-methylcysteine intermediate of the active site. A disordered region spans residues 350 to 372 (AEGGPGDPRRRAAAALTGTPAAG). A compositionally biased stretch (low complexity) spans 362–372 (AAALTGTPAAG).

It belongs to the radical SAM superfamily. RlmN family. The cofactor is [4Fe-4S] cluster.

The protein resides in the cytoplasm. It catalyses the reaction adenosine(2503) in 23S rRNA + 2 reduced [2Fe-2S]-[ferredoxin] + 2 S-adenosyl-L-methionine = 2-methyladenosine(2503) in 23S rRNA + 5'-deoxyadenosine + L-methionine + 2 oxidized [2Fe-2S]-[ferredoxin] + S-adenosyl-L-homocysteine. It carries out the reaction adenosine(37) in tRNA + 2 reduced [2Fe-2S]-[ferredoxin] + 2 S-adenosyl-L-methionine = 2-methyladenosine(37) in tRNA + 5'-deoxyadenosine + L-methionine + 2 oxidized [2Fe-2S]-[ferredoxin] + S-adenosyl-L-homocysteine. In terms of biological role, specifically methylates position 2 of adenine 2503 in 23S rRNA and position 2 of adenine 37 in tRNAs. m2A2503 modification seems to play a crucial role in the proofreading step occurring at the peptidyl transferase center and thus would serve to optimize ribosomal fidelity. This Anaeromyxobacter dehalogenans (strain 2CP-C) protein is Dual-specificity RNA methyltransferase RlmN.